Here is a 230-residue protein sequence, read N- to C-terminus: Small ribosomal subunit protein uS3 (230 aa).

In terms of domain architecture, KH type-2 spans 39-107 (VRNYLFKKLI…PVHINIEEIK (69 aa)).

It belongs to the universal ribosomal protein uS3 family. As to quaternary structure, part of the 30S ribosomal subunit. Forms a tight complex with proteins S10 and S14.

In terms of biological role, binds the lower part of the 30S subunit head. Binds mRNA in the 70S ribosome, positioning it for translation. This Vesicomyosocius okutanii subsp. Calyptogena okutanii (strain HA) protein is Small ribosomal subunit protein uS3.